A 95-amino-acid polypeptide reads, in one-letter code: Co-chaperonin GroES (95 aa).

The protein belongs to the GroES chaperonin family. In terms of assembly, heptamer of 7 subunits arranged in a ring. Interacts with the chaperonin GroEL.

It localises to the cytoplasm. Its function is as follows. Together with the chaperonin GroEL, plays an essential role in assisting protein folding. The GroEL-GroES system forms a nano-cage that allows encapsulation of the non-native substrate proteins and provides a physical environment optimized to promote and accelerate protein folding. GroES binds to the apical surface of the GroEL ring, thereby capping the opening of the GroEL channel. The polypeptide is Co-chaperonin GroES (Streptococcus salivarius).